A 296-amino-acid polypeptide reads, in one-letter code: Prostate androgen-regulated mucin-like protein 1 homolog (296 aa).

A signal peptide spans 1-20 (MVCKALITLCIFAAGLRVQG). Residues 21–244 (SPTPTLLPVS…EVENALSSGS (224 aa)) are Extracellular-facing. Residues Asn-62, Asn-96, and Asn-108 are each glycosylated (N-linked (GlcNAc...) asparagine). Residues 73–220 (LTSQLPTHPR…SPQDTEPGKV (148 aa)) are disordered. Residues 80 to 96 (HPREEAVTSPPLKREVN) show a composition bias toward basic and acidic residues. Residues 97–111 (STDSSPTGFSSNSSG) are compositionally biased toward low complexity. Residues 125–145 (SPETSVPATGSQSPTLLFSQG) show a composition bias toward polar residues. 2 stretches are compositionally biased toward low complexity: residues 146–175 (PTSA…TVNN) and 195–205 (SHTPTSHVTEP). N-linked (GlcNAc...) asparagine glycosylation is present at Asn-168. Over residues 206–217 (VPKEKSPQDTEP) the composition is skewed to basic and acidic residues. The chain crosses the membrane as a helical span at residues 245–265 (IAAITVTVIAVVLLVFGAAAY). At 266–296 (LKIRHSSYGRLLDDHDYGSWGNYNNPLYDDS) the chain is on the cytoplasmic side. Position 284 is a phosphoserine (Ser-284).

This sequence belongs to the PARM family. In terms of processing, highly N-glycosylated and O-glycosylated. As to expression, expressed in prostate. Detected in other organs at low levels, these include the heart and various tissues of the urogenital tract. Not detected in mammary gland.

The protein localises to the cell membrane. The protein resides in the golgi apparatus membrane. It localises to the endosome membrane. Its function is as follows. May regulate TLP1 expression and telomerase activity, thus enabling certain prostatic cells to resist apoptosis. The sequence is that of Prostate androgen-regulated mucin-like protein 1 homolog (Parm1) from Rattus norvegicus (Rat).